We begin with the raw amino-acid sequence, 127 residues long: Fluoride-specific ion channel FluC (127 aa).

Transmembrane regions (helical) follow at residues 4–24, 36–56, 68–88, and 99–119; these read SILA…FLGL, GTLL…AYFA, LIIT…AEVV, and AAGA…LGLF. Residues Gly75 and Thr78 each contribute to the Na(+) site.

Belongs to the fluoride channel Fluc/FEX (TC 1.A.43) family.

It is found in the cell inner membrane. It catalyses the reaction fluoride(in) = fluoride(out). Its activity is regulated as follows. Na(+) is not transported, but it plays an essential structural role and its presence is essential for fluoride channel function. Its function is as follows. Fluoride-specific ion channel. Important for reducing fluoride concentration in the cell, thus reducing its toxicity. The sequence is that of Fluoride-specific ion channel FluC from Pseudomonas paraeruginosa (strain DSM 24068 / PA7) (Pseudomonas aeruginosa (strain PA7)).